The following is a 553-amino-acid chain: Dihydroxy-acid dehydratase (553 aa).

Asp78 is a binding site for Mg(2+). Cys119 is a binding site for [2Fe-2S] cluster. The Mg(2+) site is built by Asp120 and Lys121. Residue Lys121 is modified to N6-carboxylysine. A [2Fe-2S] cluster-binding site is contributed by Cys191. Glu442 is a binding site for Mg(2+). Ser468 functions as the Proton acceptor in the catalytic mechanism.

This sequence belongs to the IlvD/Edd family. In terms of assembly, homodimer. It depends on [2Fe-2S] cluster as a cofactor. The cofactor is Mg(2+).

It catalyses the reaction (2R)-2,3-dihydroxy-3-methylbutanoate = 3-methyl-2-oxobutanoate + H2O. It carries out the reaction (2R,3R)-2,3-dihydroxy-3-methylpentanoate = (S)-3-methyl-2-oxopentanoate + H2O. It functions in the pathway amino-acid biosynthesis; L-isoleucine biosynthesis; L-isoleucine from 2-oxobutanoate: step 3/4. It participates in amino-acid biosynthesis; L-valine biosynthesis; L-valine from pyruvate: step 3/4. Its function is as follows. Functions in the biosynthesis of branched-chain amino acids. Catalyzes the dehydration of (2R,3R)-2,3-dihydroxy-3-methylpentanoate (2,3-dihydroxy-3-methylvalerate) into 2-oxo-3-methylpentanoate (2-oxo-3-methylvalerate) and of (2R)-2,3-dihydroxy-3-methylbutanoate (2,3-dihydroxyisovalerate) into 2-oxo-3-methylbutanoate (2-oxoisovalerate), the penultimate precursor to L-isoleucine and L-valine, respectively. The protein is Dihydroxy-acid dehydratase of Carboxydothermus hydrogenoformans (strain ATCC BAA-161 / DSM 6008 / Z-2901).